Reading from the N-terminus, the 422-residue chain is UDP-N-acetylglucosamine 1-carboxyvinyltransferase (422 aa).

22-23 (KN) is a phosphoenolpyruvate binding site. A UDP-N-acetyl-alpha-D-glucosamine-binding site is contributed by Arg-94. Cys-118 acts as the Proton donor in catalysis. At Cys-118 the chain carries 2-(S-cysteinyl)pyruvic acid O-phosphothioketal. Residues 123–127 (RPVDL), 163–166 (KVSV), Asp-308, and Ile-330 contribute to the UDP-N-acetyl-alpha-D-glucosamine site.

This sequence belongs to the EPSP synthase family. MurA subfamily.

The protein localises to the cytoplasm. It catalyses the reaction phosphoenolpyruvate + UDP-N-acetyl-alpha-D-glucosamine = UDP-N-acetyl-3-O-(1-carboxyvinyl)-alpha-D-glucosamine + phosphate. It functions in the pathway cell wall biogenesis; peptidoglycan biosynthesis. Its function is as follows. Cell wall formation. Adds enolpyruvyl to UDP-N-acetylglucosamine. The sequence is that of UDP-N-acetylglucosamine 1-carboxyvinyltransferase from Yersinia enterocolitica serotype O:8 / biotype 1B (strain NCTC 13174 / 8081).